A 30-amino-acid chain; its full sequence is Mycofactocin precursor peptide (30 aa).

It belongs to the mycofactocin precursor peptide family. Interacts with MftB. The post-translational modifications that lead to mycofactocin involve oxidative decarboxylation of the C-terminal tyrosine residue catalyzed by MftC, introduction of a tyramine-valine cross-link, removal of the modified C-terminal dipeptide by MftE. The released dipeptide then undergoes oxidative deamination by MftD, glycosylation by MftF and methylation by an unknown enzyme.

Precursor peptide that leads to mycofactocin (MFT) after extensive post-translational modifications by enzymes encoded by adjacent genes. Mycofactocin acts as a redox cofactor of nicotinamide-dependent oxidoreductases encoded in the same locus. This Mycobacterium ulcerans (strain Agy99) protein is Mycofactocin precursor peptide.